The primary structure comprises 383 residues: S-adenosylmethionine synthase (383 aa).

Histidine 22 is an ATP binding site. Aspartate 24 contributes to the Mg(2+) binding site. K(+) is bound at residue glutamate 50. Residues glutamate 63 and glutamine 99 each contribute to the L-methionine site. Residues 99–109 (QSSEINQAVQS) form a flexible loop region. ATP-binding positions include 160 to 162 (DMK), aspartate 235, 241 to 242 (RK), serine 258, and lysine 262. Aspartate 235 serves as a coordination point for L-methionine. Lysine 266 serves as a coordination point for L-methionine.

This sequence belongs to the AdoMet synthase family. Homotetramer; dimer of dimers. It depends on Mg(2+) as a cofactor. K(+) serves as cofactor.

It is found in the cytoplasm. It carries out the reaction L-methionine + ATP + H2O = S-adenosyl-L-methionine + phosphate + diphosphate. It functions in the pathway amino-acid biosynthesis; S-adenosyl-L-methionine biosynthesis; S-adenosyl-L-methionine from L-methionine: step 1/1. Its function is as follows. Catalyzes the formation of S-adenosylmethionine (AdoMet) from methionine and ATP. The overall synthetic reaction is composed of two sequential steps, AdoMet formation and the subsequent tripolyphosphate hydrolysis which occurs prior to release of AdoMet from the enzyme. The protein is S-adenosylmethionine synthase of Mycoplasma pneumoniae (strain ATCC 29342 / M129 / Subtype 1) (Mycoplasmoides pneumoniae).